A 407-amino-acid chain; its full sequence is Imidazolonepropionase (407 aa).

Residues histidine 74 and histidine 76 each contribute to the Fe(3+) site. Zn(2+) is bound by residues histidine 74 and histidine 76. Residues arginine 83, tyrosine 146, and histidine 179 each contribute to the 4-imidazolone-5-propanoate site. Tyrosine 146 is an N-formimidoyl-L-glutamate binding site. A Fe(3+)-binding site is contributed by histidine 244. Residue histidine 244 coordinates Zn(2+). Glutamine 247 is a 4-imidazolone-5-propanoate binding site. Aspartate 319 is a Fe(3+) binding site. Aspartate 319 contacts Zn(2+). Asparagine 321 and glycine 323 together coordinate N-formimidoyl-L-glutamate. Threonine 324 lines the 4-imidazolone-5-propanoate pocket.

This sequence belongs to the metallo-dependent hydrolases superfamily. HutI family. It depends on Zn(2+) as a cofactor. The cofactor is Fe(3+).

The protein localises to the cytoplasm. The catalysed reaction is 4-imidazolone-5-propanoate + H2O = N-formimidoyl-L-glutamate. It participates in amino-acid degradation; L-histidine degradation into L-glutamate; N-formimidoyl-L-glutamate from L-histidine: step 3/3. Functionally, catalyzes the hydrolytic cleavage of the carbon-nitrogen bond in imidazolone-5-propanoate to yield N-formimidoyl-L-glutamate. It is the third step in the universal histidine degradation pathway. This Salmonella arizonae (strain ATCC BAA-731 / CDC346-86 / RSK2980) protein is Imidazolonepropionase.